The primary structure comprises 1352 residues: Stress response protein NST1 (1352 aa).

A compositionally biased stretch (polar residues) spans 1–12 (MSSKSQQPPTGL). 9 disordered regions span residues 1–66 (MSSK…FFNF), 216–422 (NANA…TQSS), 503–522 (NGLR…VEVD), 531–616 (DHRA…FLSF), 651–693 (RRSV…AEEG), 726–880 (LREL…IAKE), 978–1118 (GLKS…DDAF), 1139–1275 (GSLI…GAGV), and 1307–1336 (GGTA…HQQQ). Positions 16–25 (AAKKRAKKAA) are enriched in basic residues. Positions 26 to 45 (KQSQNPQPQSAPQTSSQTPA) are enriched in low complexity. Over residues 46–59 (SVPPLPPASVPDPL) the composition is skewed to pro residues. Residues 218 to 229 (NARSFPSPQQTI) are compositionally biased toward polar residues. Acidic residues predominate over residues 242–254 (REEEYDDEEEIEE). A compositionally biased stretch (basic residues) spans 268 to 277 (KKNKKKKKKG). The span at 287-300 (VEPPAPLPPLPPPS) shows a compositional bias: pro residues. Over residues 317 to 330 (LPTHQPQPLSQQPP) the composition is skewed to low complexity. The segment covering 331–349 (SLNPLPPPAPASAPTPTPP) has biased composition (pro residues). Residues 368–388 (PARSARAAGKAPASAAPPHNA) are compositionally biased toward low complexity. Over residues 531 to 541 (DHRAPELHDHD) the composition is skewed to basic and acidic residues. Acidic residues predominate over residues 542 to 583 (PDDLDGEESEEYDDDDDYADDDELDDDDIGTDEADVGDEIDE). Basic and acidic residues predominate over residues 653–664 (SVREEQNLRDMQ). The span at 665-680 (EETDEEEEEEDDDESR) shows a compositional bias: acidic residues. 3 stretches are compositionally biased toward basic and acidic residues: residues 681-693 (DEPM…AEEG), 726-749 (LREL…EAQK), and 759-880 (QKAE…IAKE). Residues 712–943 (AYRERVAKQR…AAQQAQRERA (232 aa)) are a coiled coil. Residues 1008–1020 (TNATPGRSMQKTP) are compositionally biased toward polar residues. Pro residues predominate over residues 1153-1164 (PTPPAPIAPPNL). 2 stretches are compositionally biased toward polar residues: residues 1173–1186 (SDGQ…LRST) and 1208–1219 (QPQQRRPTTSWD).

This sequence belongs to the NST1 family.

The protein resides in the cytoplasm. May act as a negative regulator of salt tolerance. The protein is Stress response protein NST1 (NST1) of Cryptococcus neoformans var. neoformans serotype D (strain JEC21 / ATCC MYA-565) (Filobasidiella neoformans).